A 320-amino-acid chain; its full sequence is Transcription factor MYB80 (320 aa).

HTH myb-type domains follow at residues 9–65 and 66–116; these read KENV…RPDL and KHGQ…KKKL. DNA-binding regions (H-T-H motif) lie at residues 37 to 61 and 89 to 112; these read WRLI…TNYL and WSLI…NTKL. Positions 257–283 are disordered; sequence TAAAEEEERRKLKGEVVDQEEIGSEGG. Over residues 263–272 the composition is skewed to basic and acidic residues; the sequence is EERRKLKGEV.

Expressed in the tapetum and middle layer of developing anthers. Expressed in trichomes.

The protein resides in the nucleus. Transcription factor that binds to the DNA sequence 5'-CCAACC-3'. Regulates directly PME5, UND and GLOX1. Essential for tapetum development in anthers and microsporogenesis. Regulates the timing of tapetal programmed cell death (PCD) which is critical for pollen development. May act through the activation of UND, encoding an A1 aspartic protease. Required for anther development by regulating tapetum development, callose dissolution and exine formation. Acts upstream of A6 and FAR2/MS2, two genes required for pollen exine formation. Negatively regulates trichome endoreduplication and trichome branching. In Arabidopsis thaliana (Mouse-ear cress), this protein is Transcription factor MYB80.